We begin with the raw amino-acid sequence, 877 residues long: Telomere length regulation protein clk-2 (877 aa).

Polar residues predominate over residues 488–501 (NKDSAAITSKNNLR). The tract at residues 488–509 (NKDSAAITSKNNLRLDSDDDED) is disordered.

Belongs to the TEL2 family.

It localises to the nucleus. Its subcellular location is the chromosome. The protein localises to the telomere. In terms of biological role, DNA damage checkpoint protein required for DNA damage-induced cell cycle arrest and apoptosis, thereby playing a role in genome stability. Regulator of telomere length. In Caenorhabditis elegans, this protein is Telomere length regulation protein clk-2 (clk-2).